We begin with the raw amino-acid sequence, 366 residues long: tRNA(Met) cytidine acetate ligase (366 aa).

ATP contacts are provided by residues 7 to 20 (IAEFNPFHNGHKYL), Gly-96, Asn-152, and Arg-175.

It belongs to the TmcAL family.

It is found in the cytoplasm. It carries out the reaction cytidine(34) in elongator tRNA(Met) + acetate + ATP = N(4)-acetylcytidine(34) in elongator tRNA(Met) + AMP + diphosphate. Its function is as follows. Catalyzes the formation of N(4)-acetylcytidine (ac(4)C) at the wobble position of elongator tRNA(Met), using acetate and ATP as substrates. First activates an acetate ion to form acetyladenylate (Ac-AMP) and then transfers the acetyl group to tRNA to form ac(4)C34. This Streptococcus mutans serotype c (strain ATCC 700610 / UA159) protein is tRNA(Met) cytidine acetate ligase.